Consider the following 302-residue polypeptide: uncharacterized protein (302 aa).

This is an uncharacterized protein from Ictaluridae (bullhead catfishes).